Consider the following 346-residue polypeptide: Anthranilate phosphoribosyltransferase (346 aa).

5-phospho-alpha-D-ribose 1-diphosphate is bound by residues Gly-81, 84–85, 91–94, 109–117, and Ser-121; these read GD, NVST, and KHGNRSVSS. Gly-81 is a binding site for anthranilate. Ser-93 is a Mg(2+) binding site. An anthranilate-binding site is contributed by Asn-112. Arg-167 is an anthranilate binding site. Positions 226 and 227 each coordinate Mg(2+).

Belongs to the anthranilate phosphoribosyltransferase family. In terms of assembly, homodimer. The cofactor is Mg(2+).

It carries out the reaction N-(5-phospho-beta-D-ribosyl)anthranilate + diphosphate = 5-phospho-alpha-D-ribose 1-diphosphate + anthranilate. Its pathway is amino-acid biosynthesis; L-tryptophan biosynthesis; L-tryptophan from chorismate: step 2/5. Catalyzes the transfer of the phosphoribosyl group of 5-phosphorylribose-1-pyrophosphate (PRPP) to anthranilate to yield N-(5'-phosphoribosyl)-anthranilate (PRA). The chain is Anthranilate phosphoribosyltransferase from Hahella chejuensis (strain KCTC 2396).